The primary structure comprises 421 residues: Solute carrier family 35 member F3 (421 aa).

The tract at residues 25-53 (EGEERPREPPGPAEAQAPAGTEAGGRTSR) is disordered. Over residues 37–49 (AEAQAPAGTEAGG) the composition is skewed to low complexity. Helical transmembrane passes span 66-86 (VFWG…STQL), 98-118 (FTLT…YYAG), 149-169 (VFFT…YLYL), 179-199 (DVSV…WIVL), 208-228 (IVAA…DGFH), 232-252 (VIGI…KVLF), 266-286 (LFLS…PVIL), 305-325 (LCGF…GIAV), 326-346 (TYPT…AVVD), and 352-372 (IVFN…FLLL). A disordered region spans residues 394 to 421 (KEETAESSGDLGTGPQSRSRRARPSFAR). Basic residues predominate over residues 411 to 421 (RSRRARPSFAR).

This sequence belongs to the SLC35F solute transporter family.

The protein localises to the membrane. The catalysed reaction is thiamine(in) = thiamine(out). Mediates thiamine transport. The chain is Solute carrier family 35 member F3 (Slc35f3) from Mus musculus (Mouse).